The sequence spans 186 residues: MELNEVYQYTKEHMEKTIDAMKRDFATLRTGKVSTAIVEPIRVDYYGTPTPLSQVGSVIASDATTLVISPWEKNLLKGIEKAIQEANIGVNPNNDGDVIKLFFPPMTSEQRKEIAKDAKALGEKAKVAVRNIRKESNDKIKKLEKDKLITEDQSKKAHDEVQKYTDDYVKKIDDMVKSKEEEILKV.

The protein belongs to the RRF family.

The protein resides in the cytoplasm. In terms of biological role, responsible for the release of ribosomes from messenger RNA at the termination of protein biosynthesis. May increase the efficiency of translation by recycling ribosomes from one round of translation to another. The polypeptide is Ribosome-recycling factor (Wolinella succinogenes (strain ATCC 29543 / DSM 1740 / CCUG 13145 / JCM 31913 / LMG 7466 / NCTC 11488 / FDC 602W) (Vibrio succinogenes)).